The following is a 556-amino-acid chain: Arginine--tRNA ligase (556 aa).

The 'HIGH' region motif lies at 129–139; the sequence is ANPTGPLHVGH.

This sequence belongs to the class-I aminoacyl-tRNA synthetase family. As to quaternary structure, monomer.

It localises to the cytoplasm. The enzyme catalyses tRNA(Arg) + L-arginine + ATP = L-arginyl-tRNA(Arg) + AMP + diphosphate. This Desulfosudis oleivorans (strain DSM 6200 / JCM 39069 / Hxd3) (Desulfococcus oleovorans) protein is Arginine--tRNA ligase.